A 704-amino-acid chain; its full sequence is UvrABC system protein B (704 aa).

Positions 35–188 (ERINNGEKDV…DDLLRKFVSM (154 aa)) constitute a Helicase ATP-binding domain. Residue 48-55 (GATGTGKS) coordinates ATP. The Beta-hairpin signature appears at 101 to 124 (YYDYYQPEAYVAQTDTFIEKDSSI). Residues 438–604 (QIDDLLGEIR…PLRKKIADIT (167 aa)) enclose the Helicase C-terminal domain. In terms of domain architecture, UVR spans 659 to 694 (VGMIAQLTEQMHGAAAELQFEVAARIRDEVSELKKE).

This sequence belongs to the UvrB family. Forms a heterotetramer with UvrA during the search for lesions. Interacts with UvrC in an incision complex.

The protein resides in the cytoplasm. In terms of biological role, the UvrABC repair system catalyzes the recognition and processing of DNA lesions. A damage recognition complex composed of 2 UvrA and 2 UvrB subunits scans DNA for abnormalities. Upon binding of the UvrA(2)B(2) complex to a putative damaged site, the DNA wraps around one UvrB monomer. DNA wrap is dependent on ATP binding by UvrB and probably causes local melting of the DNA helix, facilitating insertion of UvrB beta-hairpin between the DNA strands. Then UvrB probes one DNA strand for the presence of a lesion. If a lesion is found the UvrA subunits dissociate and the UvrB-DNA preincision complex is formed. This complex is subsequently bound by UvrC and the second UvrB is released. If no lesion is found, the DNA wraps around the other UvrB subunit that will check the other stand for damage. This is UvrABC system protein B from Pseudarthrobacter chlorophenolicus (strain ATCC 700700 / DSM 12829 / CIP 107037 / JCM 12360 / KCTC 9906 / NCIMB 13794 / A6) (Arthrobacter chlorophenolicus).